Reading from the N-terminus, the 98-residue chain is DNA-binding protein Fis (98 aa).

The segment at residues 74–93 (QTRAATMMGINRGTLRKKLK) is a DNA-binding region (H-T-H motif).

It belongs to the transcriptional regulatory Fis family. Homodimer.

In terms of biological role, activates ribosomal RNA transcription. Plays a direct role in upstream activation of rRNA promoters. This is DNA-binding protein Fis from Photobacterium profundum (strain SS9).